Reading from the N-terminus, the 369-residue chain is DNA replication and repair protein RecF (369 aa).

Residue 30–37 (GENAQGKT) coordinates ATP.

It belongs to the RecF family.

It is found in the cytoplasm. The RecF protein is involved in DNA metabolism; it is required for DNA replication and normal SOS inducibility. RecF binds preferentially to single-stranded, linear DNA. It also seems to bind ATP. The polypeptide is DNA replication and repair protein RecF (Oceanobacillus iheyensis (strain DSM 14371 / CIP 107618 / JCM 11309 / KCTC 3954 / HTE831)).